Here is a 631-residue protein sequence, read N- to C-terminus: PTS system beta-glucoside-specific EIIBCA component (631 aa).

Positions 1 to 86 constitute a PTS EIIB type-1 domain; sequence MNYETLASEI…LSLDGMARFS (86 aa). The Phosphocysteine intermediate; for EIIB activity role is filled by C26. The PTS EIIC type-1 domain occupies 105-466; sequence DIISSIFTPF…DETQPAAADS (362 aa). 10 helical membrane passes run 120–140, 146–166, 175–195, 206–226, 248–268, 295–315, 328–348, 358–378, 385–405, and 434–454; these read ATGI…ISES, LLFA…GYTA, FTTL…AFNA, FLGI…ILFA, FFTP…LIGP, VMGA…FVPL, LLPL…GVLL, IAGS…VYGV, PFIF…YAHT, and AVIG…SFGV. The region spanning 501-605 is the PTS EIIA type-1 domain; sequence DRTFASGVMG…DLTTPIVITN (105 aa). H553 functions as the Tele-phosphohistidine intermediate; for EIIA activity in the catalytic mechanism.

The protein resides in the cell inner membrane. The phosphoenolpyruvate-dependent sugar phosphotransferase system (sugar PTS), a major carbohydrate active -transport system, catalyzes the phosphorylation of incoming sugar substrates concomitantly with their translocation across the cell membrane. This system is involved in beta-glucoside transport. Its function is as follows. Acts both as a kinase and as a phosphatase on ArbG. The chain is PTS system beta-glucoside-specific EIIBCA component (arbF) from Dickeya chrysanthemi (Pectobacterium chrysanthemi).